The primary structure comprises 1006 residues: Unconventional myosin-Id (1006 aa).

Ala2 bears the N-acetylalanine mark. Residues 9-695 enclose the Myosin motor domain; that stretch reads FGKADFVLMD…TLFTLEELRA (687 aa). 102–109 provides a ligand contact to ATP; it reads GESGAGKT. Phosphoserine is present on Ser200. Residue Tyr536 is modified to Phosphotyrosine. The actin-binding stretch occupies residues 572 to 594; that stretch reads MIALVDNLASKEPYYVRCIKPND. IQ domains follow at residues 699 to 719 and 721 to 741; these read VRIV…MRYK and TKAA…SYIH. The TH1 domain maps to 812 to 1005; that stretch reads GQRADLGLQR…RSGFILSVPG (194 aa).

The protein belongs to the TRAFAC class myosin-kinesin ATPase superfamily. Myosin family. In terms of assembly, interacts (via the two IQ motifs) with calmodulin. Binds an additional calmodulin chain via a third, C-terminal region. Interacts with F-actin.

The protein localises to the cytoplasm. It is found in the perikaryon. It localises to the cell projection. Its subcellular location is the dendrite. The protein resides in the early endosome. The protein localises to the cell cortex. Unconventional myosin that functions as actin-based motor protein with ATPase activity. Plays a role in endosomal protein trafficking, and especially in the transfer of cargo proteins from early to recycling endosomes. Required for normal planar cell polarity in ciliated tracheal cells, for normal rotational polarity of cilia, and for coordinated, unidirectional ciliary movement in the trachea. Required for normal, polarized cilia organization in brain ependymal epithelial cells. This is Unconventional myosin-Id (MYO1D) from Bos taurus (Bovine).